A 522-amino-acid polypeptide reads, in one-letter code: Maturase K (522 aa).

It belongs to the intron maturase 2 family. MatK subfamily.

It localises to the plastid. Its subcellular location is the chloroplast. Functionally, usually encoded in the trnK tRNA gene intron. Probably assists in splicing its own and other chloroplast group II introns. The polypeptide is Maturase K (Iris tenax (Oregon iris)).